The chain runs to 288 residues: MRGYATAYGAATVLNAIANWKGSAFGISLRTSAEVVLDDSEGVRGDVEGIDTTLIVRCVESVLSHFDLDYGGVVRTRSEIPVASGLKSSSAAANAAVLATVDALGEEIDMIDAVRIGVEAALDAGVTVTGAFDDACASMLGGVVVTDNLKRCLLKRDELHSDVVLLIPEEQFFSRDVDVERCRALSRVADAVFEMAIEGDYAGAMTLNGLLYCTALRRSPEPIVLALRAGAAGATLSGTGPAYAALVDDISGDDVVEAWSSLGGRIIRAAVENRSARMGQADLFQEGI.

Residue 81 to 91 (PVASGLKSSSA) participates in ATP binding.

Belongs to the GHMP kinase family. Archaeal shikimate kinase subfamily.

The protein localises to the cytoplasm. It carries out the reaction shikimate + ATP = 3-phosphoshikimate + ADP + H(+). It functions in the pathway metabolic intermediate biosynthesis; chorismate biosynthesis; chorismate from D-erythrose 4-phosphate and phosphoenolpyruvate: step 5/7. This Methanothrix thermoacetophila (strain DSM 6194 / JCM 14653 / NBRC 101360 / PT) (Methanosaeta thermophila) protein is Shikimate kinase.